A 267-amino-acid chain; its full sequence is Coiled-coil domain-containing protein 172 (267 aa).

Coiled coils occupy residues 24 to 97 (MREV…CEAI) and 128 to 191 (LMKE…EETE).

The protein belongs to the CCDC172 family. As to quaternary structure, may interact with TEKT2.

The protein localises to the cytoplasm. The protein resides in the cell projection. It localises to the cilium. This Mus musculus (Mouse) protein is Coiled-coil domain-containing protein 172 (Ccdc172).